Reading from the N-terminus, the 257-residue chain is RAALQAEIEELRATLEQTERSRKIAEQELLDASERVQLLHTQNASLINAKKKLENDVSQLQSEVEEVIQRARNAEEKAKKAITDAAMMAEELKKEQDTSAHLERMKKNMEQTVKDLQHRLDEAEQLALKGGKKQIQKLEARVRELEGEVENEQKRNAEAVKGLRKHERRVKELTYQTEEDRKNVLRLQDLVDKLQAKVKSYKRQAEEAEEQSNVNLAKFRKLQHELEEAEERADIAESQVNKLRVKSREVHTKISAE.

Residues 1-257 (RAALQAEIEE…REVHTKISAE (257 aa)) are a coiled coil. Phosphoserine occurs at positions 33, 45, and 58.

In terms of assembly, muscle myosin is a hexameric protein that consists of 2 heavy chain subunits (MHC), 2 alkali light chain subunits (MLC) and 2 regulatory light chain subunits (MLC-2).

Its subcellular location is the cytoplasm. The protein resides in the myofibril. In terms of biological role, muscle contraction. The protein is Myosin-8 (Myh8) of Rattus norvegicus (Rat).